The primary structure comprises 488 residues: Acetyl-coenzyme A carboxylase carboxyl transferase subunit beta, chloroplastic (488 aa).

In terms of domain architecture, CoA carboxyltransferase N-terminal spans 224–488 (LWIQCDNCYG…FFPLNKNEIK (265 aa)). Zn(2+) contacts are provided by cysteine 228, cysteine 231, cysteine 244, and cysteine 247. Residues 228-247 (CDNCYGLMYKKVEMNVCEEC) form a C4-type zinc finger.

It belongs to the AccD/PCCB family. In terms of assembly, acetyl-CoA carboxylase is a heterohexamer composed of biotin carboxyl carrier protein, biotin carboxylase and 2 subunits each of ACCase subunit alpha and ACCase plastid-coded subunit beta (accD). Requires Zn(2+) as cofactor.

Its subcellular location is the plastid. It is found in the chloroplast stroma. The catalysed reaction is N(6)-carboxybiotinyl-L-lysyl-[protein] + acetyl-CoA = N(6)-biotinyl-L-lysyl-[protein] + malonyl-CoA. Its pathway is lipid metabolism; malonyl-CoA biosynthesis; malonyl-CoA from acetyl-CoA: step 1/1. Functionally, component of the acetyl coenzyme A carboxylase (ACC) complex. Biotin carboxylase (BC) catalyzes the carboxylation of biotin on its carrier protein (BCCP) and then the CO(2) group is transferred by the transcarboxylase to acetyl-CoA to form malonyl-CoA. In Arabis hirsuta (Hairy rock-cress), this protein is Acetyl-coenzyme A carboxylase carboxyl transferase subunit beta, chloroplastic.